The chain runs to 273 residues: Undecaprenyl-diphosphatase (273 aa).

The next 7 membrane-spanning stretches (helical) occupy residues 6 to 26 (SLLIAAILGVVEGLTEFLPVS), 45 to 65 (AKTFEVVIQLGSILAVVVMFW), 90 to 110 (LTLIHILLGMIPAVVLGLLFH), 116 to 136 (LFNPINVMYALVVGGLLLIAA), 190 to 210 (YAASEFSFLLAVPMMMGATAL), 222 to 242 (GDIPMFAVGFITAFVVALIAI), and 252 to 272 (ISFIPFAIYRFIVAAAVYVVF).

Belongs to the UppP family.

The protein localises to the cell inner membrane. The enzyme catalyses di-trans,octa-cis-undecaprenyl diphosphate + H2O = di-trans,octa-cis-undecaprenyl phosphate + phosphate + H(+). Catalyzes the dephosphorylation of undecaprenyl diphosphate (UPP). Confers resistance to bacitracin. The polypeptide is Undecaprenyl-diphosphatase (Escherichia coli O157:H7).